The sequence spans 212 residues: ATP-dependent Clp protease proteolytic subunit (212 aa).

Ser-107 serves as the catalytic Nucleophile. His-132 is an active-site residue.

This sequence belongs to the peptidase S14 family. As to quaternary structure, fourteen ClpP subunits assemble into 2 heptameric rings which stack back to back to give a disk-like structure with a central cavity, resembling the structure of eukaryotic proteasomes.

The protein localises to the cytoplasm. It carries out the reaction Hydrolysis of proteins to small peptides in the presence of ATP and magnesium. alpha-casein is the usual test substrate. In the absence of ATP, only oligopeptides shorter than five residues are hydrolyzed (such as succinyl-Leu-Tyr-|-NHMec, and Leu-Tyr-Leu-|-Tyr-Trp, in which cleavage of the -Tyr-|-Leu- and -Tyr-|-Trp bonds also occurs).. Cleaves peptides in various proteins in a process that requires ATP hydrolysis. Has a chymotrypsin-like activity. Plays a major role in the degradation of misfolded proteins. This is ATP-dependent Clp protease proteolytic subunit from Pseudoalteromonas atlantica (strain T6c / ATCC BAA-1087).